The sequence spans 513 residues: Putative thymidine phosphorylase (513 aa).

This sequence belongs to the thymidine/pyrimidine-nucleoside phosphorylase family. Type 2 subfamily.

The enzyme catalyses thymidine + phosphate = 2-deoxy-alpha-D-ribose 1-phosphate + thymine. The chain is Putative thymidine phosphorylase from Bradyrhizobium diazoefficiens (strain JCM 10833 / BCRC 13528 / IAM 13628 / NBRC 14792 / USDA 110).